We begin with the raw amino-acid sequence, 762 residues long: 5-methyltetrahydropteroyltriglutamate--homocysteine methyltransferase (762 aa).

Residues 17–20 (REWK) and K111 contribute to the 5-methyltetrahydropteroyltri-L-glutamate site. Residues 435–437 (IGS) and E488 each bind L-homocysteine. L-methionine contacts are provided by residues 435–437 (IGS) and E488. Residues 519–520 (RC) and W565 each bind 5-methyltetrahydropteroyltri-L-glutamate. D603 is a binding site for L-homocysteine. D603 serves as a coordination point for L-methionine. E609 is a binding site for 5-methyltetrahydropteroyltri-L-glutamate. Residues H645, C647, and E669 each contribute to the Zn(2+) site. The active-site Proton donor is the H698. C730 is a Zn(2+) binding site.

This sequence belongs to the vitamin-B12 independent methionine synthase family. Zn(2+) is required as a cofactor.

It carries out the reaction 5-methyltetrahydropteroyltri-L-glutamate + L-homocysteine = tetrahydropteroyltri-L-glutamate + L-methionine. Its pathway is amino-acid biosynthesis; L-methionine biosynthesis via de novo pathway; L-methionine from L-homocysteine (MetE route): step 1/1. Its function is as follows. Catalyzes the transfer of a methyl group from 5-methyltetrahydrofolate to homocysteine resulting in methionine formation. The chain is 5-methyltetrahydropteroyltriglutamate--homocysteine methyltransferase from Bacillus cereus (strain ATCC 10987 / NRS 248).